The primary structure comprises 43 residues: Peroxidase (43 aa).

The protein belongs to the peroxidase family. Classical plant (class III) peroxidase subfamily. Requires Ca(2+) as cofactor. Heme b is required as a cofactor.

It carries out the reaction 2 a phenolic donor + H2O2 = 2 a phenolic radical donor + 2 H2O. Its function is as follows. Removal of H(2)O(2), oxidation of toxic reductants, biosynthesis and degradation of lignin, suberization, auxin catabolism, response to environmental stresses such as wounding, pathogen attack and oxidative stress. These functions might be dependent on each isozyme/isoform in each plant tissue. In Cynara cardunculus var. scolymus (Globe artichoke), this protein is Peroxidase.